We begin with the raw amino-acid sequence, 464 residues long: Protein FAM90A3 (464 aa).

3 disordered regions span residues 1-42 (MMAR…DPRL), 70-389 (PATL…HDGA), and 411-437 (APSFHSPEKPGAFLAQSPHVSEKSEAP). 2 stretches are compositionally biased toward basic and acidic residues: residues 74–89 (GKKEGKENLKPWKPRV) and 97–114 (NKDKGEKEERPRQQDPQR). Low complexity predominate over residues 180-197 (LASLSPLRKASLSSSSSL).

It belongs to the FAM90 family.

The chain is Protein FAM90A3 from Homo sapiens (Human).